We begin with the raw amino-acid sequence, 456 residues long: Signal transduction histidine-protein kinase ArlS (456 aa).

The next 2 membrane-spanning stretches (helical) occupy residues 13-33 and 157-177; these read LITTLITFTTILLFCLIIIFF and IVALAFGLIATIITAGVSYIF. The region spanning 179–232 is the HAMP domain; the sequence is SQITKPIVTMSNKMNQIRRDGFQNKLELTTNYEETDNLIDTFNEMMYQIEESFN. In terms of domain architecture, Histidine kinase spans 240–456; that stretch reads DASHELRTPL…TFKISFPVLN (217 aa). His-243 carries the phosphohistidine; by autocatalysis modification.

Autophosphorylated.

It is found in the cell membrane. It catalyses the reaction ATP + protein L-histidine = ADP + protein N-phospho-L-histidine.. Functionally, member of the two-component regulatory system ArlS/ArlR. ArlS probably functions as a sensor protein kinase which is autophosphorylated at a histidine residue and transfers its phosphate group to ArlR. The protein is Signal transduction histidine-protein kinase ArlS (arlS) of Staphylococcus epidermidis (strain ATCC 12228 / FDA PCI 1200).